The following is a 206-amino-acid chain: Thymidylate kinase (206 aa).

11–18 (GIDGAGKT) serves as a coordination point for ATP.

This sequence belongs to the thymidylate kinase family.

The catalysed reaction is dTMP + ATP = dTDP + ADP. In terms of biological role, phosphorylation of dTMP to form dTDP in both de novo and salvage pathways of dTTP synthesis. This Burkholderia cenocepacia (strain ATCC BAA-245 / DSM 16553 / LMG 16656 / NCTC 13227 / J2315 / CF5610) (Burkholderia cepacia (strain J2315)) protein is Thymidylate kinase.